The sequence spans 112 residues: MHETIRVKIITPSSIAFEKQSKMVTMPGEDGMFGVLPHHVPMIVNLKAGLVQIYIYNIHNYENTYLISGGVTEITSHYINIVTEVAINVTNLSESEISTQRYELQKLLSHQH.

It belongs to the ATPase epsilon chain family. F-type ATPases have 2 components, CF(1) - the catalytic core - and CF(0) - the membrane proton channel. CF(1) has five subunits: alpha(3), beta(3), gamma(1), delta(1), epsilon(1). CF(0) has three main subunits: a, b and c.

The protein resides in the cell inner membrane. Its function is as follows. Produces ATP from ADP in the presence of a proton gradient across the membrane. The chain is ATP synthase epsilon chain (atpC) from Rickettsia prowazekii (strain Madrid E).